Consider the following 127-residue polypeptide: Snaclec macrovipecetin subunit beta (127 aa).

Disulfide bonds link Cys-4–Cys-15, Cys-32–Cys-121, and Cys-98–Cys-113. Residues 11-122 (YEGHCYKVFD…CSRTYKFVCK (112 aa)) form the C-type lectin domain.

Heterodimer of subunits alpha and beta; disulfide-linked. Expressed by the venom gland.

It is found in the secreted. Its function is as follows. Interferes with one step of hemostasis (modulation of platelet aggregation, or coagulation cascade, for example). In Macrovipera lebetinus (Levantine viper), this protein is Snaclec macrovipecetin subunit beta.